A 182-amino-acid chain; its full sequence is Protein GrpE (182 aa).

The tract at residues 1–35 is disordered; it reads MTQENQTPPPEQENLAADPAVETTAETPAVKTPEQ.

This sequence belongs to the GrpE family. As to quaternary structure, homodimer.

It is found in the cytoplasm. Functionally, participates actively in the response to hyperosmotic and heat shock by preventing the aggregation of stress-denatured proteins, in association with DnaK and GrpE. It is the nucleotide exchange factor for DnaK and may function as a thermosensor. Unfolded proteins bind initially to DnaJ; upon interaction with the DnaJ-bound protein, DnaK hydrolyzes its bound ATP, resulting in the formation of a stable complex. GrpE releases ADP from DnaK; ATP binding to DnaK triggers the release of the substrate protein, thus completing the reaction cycle. Several rounds of ATP-dependent interactions between DnaJ, DnaK and GrpE are required for fully efficient folding. This is Protein GrpE from Polynucleobacter necessarius subsp. necessarius (strain STIR1).